We begin with the raw amino-acid sequence, 390 residues long: Protein NDRG4-A (390 aa).

The segment at 356 to 390 (LTSASSVDGSRPRPCTQSESSDGIGQINHTMEVSC) is disordered. The span at 370–390 (CTQSESSDGIGQINHTMEVSC) shows a compositional bias: polar residues.

It belongs to the NDRG family.

The protein localises to the cytoplasm. It is found in the cytosol. In terms of biological role, contributes to the maintenance of intracerebral BDNF levels within the normal range. May enhance growth factor-induced ERK1 and ERK2 phosphorylation. May attenuate growth factor-promoted ELK1 phosphorylation in a microtubule-dependent manner. This Xenopus laevis (African clawed frog) protein is Protein NDRG4-A (ndrg4-a).